The following is a 1483-amino-acid chain: Tyrosine-protein kinase BAZ1B (1483 aa).

One can recognise a WAC domain in the interval 20 to 126 (EPLFTIPHTQ…GEECDFEVGK (107 aa)). The segment at 145–212 (EEATEKKSDG…TSLKKGERKW (68 aa)) is disordered. 2 stretches are compositionally biased toward basic and acidic residues: residues 148 to 165 (TEKKSDGACDSPSSDKEN) and 172 to 195 (DHQKKETVVKEDEGRRESINDRAR). 3 positions are modified to phosphoserine: Ser152, Ser158, and Ser161. Positions 207–213 (KGERKWA) match the C motif motif. Thr266 is subject to Phosphothreonine. Residues 302-333 (NPSTKRKNTGSPDRKPSKKSKTDNSSLSSPLN) are disordered. Residues Ser330, Ser345, Ser347, Ser349, Ser361, and Ser374 each carry the phosphoserine modification. Disordered regions lie at residues 379-432 (HTNF…KTPK) and 446-470 (GTQKMTRAPRNSGGTPRTSSKPHKH). 2 stretches are compositionally biased toward basic residues: residues 384–395 (IPKKGPPAKKPG) and 423–432 (SPKKGLKTPK). Positions 533–586 (KRWASMSEEQRKEYLKKKREELKKKLKEKAKERREKEMLERLEKQKRYEDQELT) form a coiled coil. The DDT domain occupies 604–668 (NTLFGDVAMV…LQTLLQDEIA (65 aa)). Residues Ser699, Ser705, Ser708, and Ser716 each carry the phosphoserine modification. Residues 768-814 (TRQQMSAELWKERLAVLKEENDKKRAEKQKRKEMEAKNKENGKVENG) adopt a coiled-coil conformation. The segment covering 788–810 (NDKKRAEKQKRKEMEAKNKENGK) has biased composition (basic and acidic residues). Residues 788-817 (NDKKRAEKQKRKEMEAKNKENGKVENGLGK) form a disordered region. Lys826 is covalently cross-linked (Glycyl lysine isopeptide (Lys-Gly) (interchain with G-Cter in SUMO1); alternate). Lys826 is covalently cross-linked (Glycyl lysine isopeptide (Lys-Gly) (interchain with G-Cter in SUMO2); alternate). Positions 850 to 893 (IQAKKEREIQEREMKVKLERQAEEERIRKHKAAAEKAFQEGIAK) form a coiled coil. A Glycyl lysine isopeptide (Lys-Gly) (interchain with G-Cter in SUMO2) cross-link involves residue Lys853. Ser947 carries the phosphoserine modification. Glycyl lysine isopeptide (Lys-Gly) (interchain with G-Cter in SUMO2) cross-links involve residues Lys1043, Lys1089, and Lys1107. The PHD-type zinc finger occupies 1184–1234 (NARCKVCRKKGEDDKLILCDECNKAFHLFCLRPALYEVPDGEWQCPACQPA). A disordered region spans residues 1237 to 1326 (RRNSRGRNYT…PKAPPVDDAE (90 aa)). Positions 1245 to 1283 (YTEESASEDSEDDESDEEEEEEEEEEEEEDYEVAGLRLR) form a coiled coil. The span at 1249 to 1276 (SASEDSEDDESDEEEEEEEEEEEEEDYE) shows a compositional bias: acidic residues. Basic residues-rich tracts occupy residues 1282 to 1292 (LRPRKTIRGKH) and 1301 to 1316 (SGRRPGKKPHSTRRSQ). A Phosphoserine modification is found at Ser1315. At Lys1335 the chain carries N6-acetyllysine. Positions 1339–1443 (RRQSLELQKC…QCLVALLHKH (105 aa)) constitute a Bromo domain. Phosphoserine is present on residues Ser1342 and Ser1468. Residues 1455–1483 (KKFPDRLAEDEGDSEPEAVGQSRGRRQKK) are disordered.

It belongs to the WAL family. BAZ1B subfamily. As to quaternary structure, component of the WICH-1 ISWI chromatin remodeling complex, at least composed of SMARCA1 and BAZ1B/WSTF, which regulates the spacing of histone octamers on the DNA template to facilitate access to DNA. Within the WICH-1 ISWI chromatin remodeling complex interacts with SMARCA1; the interaction is direct. Component of the WICH-5 ISWI chromatin remodeling complex (also called the WICH complex), at least composed of SMARCA5/SNF2H and BAZ1B/WSTF, which regulates the spacing of histone octamers on the DNA template to facilitate access to DNA. Within the WICH-5 ISWI chromatin remodeling complex interacts with SMARCA5/SNF2H; the interaction is direct. Component of the B-WICH chromatin remodeling complex, at least composed of SMARCA5/SNF2H, BAZ1B/WSTF, SF3B1, DEK, MYO1C, ERCC6, MYBBP1A and DDX21. Within the B-WICH chromatin remodeling complex, interacts with SMARCA5/SNF2H, DDX21, DEK, MYBBP1A, SF3B1, ERCC6 and MYO1C. Interacts with PCNA; the interaction is direct and is required for BAZ1B/WSTF binding to replication foci during S phase. Interacts with CDT1. The cofactor is Mn(2+). As to expression, ubiquitously expressed with high levels of expression in heart, brain, placenta, skeletal muscle and ovary.

It is found in the nucleus. The catalysed reaction is L-tyrosyl-[protein] + ATP = O-phospho-L-tyrosyl-[protein] + ADP + H(+). Its function is as follows. Atypical tyrosine-protein kinase that plays a central role in chromatin remodeling and acts as a transcription regulator. Involved in DNA damage response by phosphorylating 'Tyr-142' of histone H2AX (H2AXY142ph). H2AXY142ph plays a central role in DNA repair and acts as a mark that distinguishes between apoptotic and repair responses to genotoxic stress. Regulatory subunit of the ATP-dependent WICH-1 and WICH-5 ISWI chromatin remodeling complexes, which form ordered nucleosome arrays on chromatin and facilitate access to DNA during DNA-templated processes such as DNA replication, transcription, and repair. Both complexes regulate the spacing of nucleosomes along the chromatin and have the ability to slide mononucleosomes to the center of a DNA template. The WICH-1 ISWI chromatin remodeling complex has a lower ATP hydrolysis rate than the WICH-5 ISWI chromatin remodeling complex. The WICH-5 ISWI chromatin-remodeling complex regulates the transcription of various genes, has a role in RNA polymerase I transcription. Within the B-WICH complex has a role in RNA polymerase III transcription. Mediates the recruitment of the WICH-5 ISWI chromatin remodeling complex to replication foci during DNA replication. This is Tyrosine-protein kinase BAZ1B (BAZ1B) from Homo sapiens (Human).